The primary structure comprises 211 residues: uncharacterized protein (211 aa).

A coiled-coil region spans residues 105–143 (IEENEFDKVRKSSDKLINEIEKTKSSLREDVKTALSEVR). Residues 191-211 (QWFTGFVGVVSSVVLIILFYF) form a helical membrane-spanning segment.

It belongs to the CCDC90 family.

The protein localises to the mitochondrion. It is found in the membrane. This is an uncharacterized protein from Schizosaccharomyces pombe (strain 972 / ATCC 24843) (Fission yeast).